The primary structure comprises 56 residues: Probable head completion protein 2 (56 aa).

This sequence belongs to the skunalikevirus head completion protein 2 family.

Its subcellular location is the virion. Functionally, probably functions as a stopper that is part of the head-tail connector and that locks the viral DNA in the capsid. During assembly, functions as a docking platform which the preassembled tail can bind to. Plays a role in morphogenesis of the virion capsid after genome packaging. In Lactococcus lactis (Lactococcus lactis bacteriophage SK1), this protein is Probable head completion protein 2.